Reading from the N-terminus, the 358-residue chain is UDP-3-O-acylglucosamine N-acyltransferase (358 aa).

His252 (proton acceptor) is an active-site residue.

It belongs to the transferase hexapeptide repeat family. LpxD subfamily. Homotrimer.

It catalyses the reaction a UDP-3-O-[(3R)-3-hydroxyacyl]-alpha-D-glucosamine + a (3R)-hydroxyacyl-[ACP] = a UDP-2-N,3-O-bis[(3R)-3-hydroxyacyl]-alpha-D-glucosamine + holo-[ACP] + H(+). Its pathway is bacterial outer membrane biogenesis; LPS lipid A biosynthesis. Its function is as follows. Catalyzes the N-acylation of UDP-3-O-acylglucosamine using 3-hydroxyacyl-ACP as the acyl donor. Is involved in the biosynthesis of lipid A, a phosphorylated glycolipid that anchors the lipopolysaccharide to the outer membrane of the cell. The polypeptide is UDP-3-O-acylglucosamine N-acyltransferase (Paraburkholderia phymatum (strain DSM 17167 / CIP 108236 / LMG 21445 / STM815) (Burkholderia phymatum)).